The sequence spans 235 residues: MDARERLIVGLDVPTIGEAEKLVSTLGDDILFYKIGYQLVFAGGLEFARDLAASGKKIFLDMKLLDIDNTVASGVENIAKMGMSMLTLHAYPKAMKAAVEAAAGSGLCLLGVTVLTSMDAEDLADAGYSQDPHSLVLRRAGQARAAGMGGIVCSAAEAAEVREIVGPDMAIVTPGIRPTGSDHGDQKRVMTPFDALKAGATHLVVARPIVKAPDPRDAARAVLNEMVGALWPANR.

Substrate contacts are provided by residues D12, K34, 61 to 70, T116, R177, Q186, and R207; that span reads DMKLLDIDNT. K63 serves as the catalytic Proton donor.

The protein belongs to the OMP decarboxylase family. Type 1 subfamily. Homodimer.

It catalyses the reaction orotidine 5'-phosphate + H(+) = UMP + CO2. The protein operates within pyrimidine metabolism; UMP biosynthesis via de novo pathway; UMP from orotate: step 2/2. Functionally, catalyzes the decarboxylation of orotidine 5'-monophosphate (OMP) to uridine 5'-monophosphate (UMP). This chain is Orotidine 5'-phosphate decarboxylase, found in Rhizobium leguminosarum bv. trifolii (strain WSM2304).